Reading from the N-terminus, the 199-residue chain is Recombination protein RecR (199 aa).

The C4-type zinc-finger motif lies at 58 to 73 (CSTCNNLTDKDPCTIC). The Toprim domain occupies 81–176 (NLICVVQDAR…RVTRLAYGLP (96 aa)).

The protein belongs to the RecR family.

Its function is as follows. May play a role in DNA repair. It seems to be involved in an RecBC-independent recombinational process of DNA repair. It may act with RecF and RecO. In Natranaerobius thermophilus (strain ATCC BAA-1301 / DSM 18059 / JW/NM-WN-LF), this protein is Recombination protein RecR.